The sequence spans 707 residues: ATP-dependent zinc metalloprotease FtsH (707 aa).

The Cytoplasmic segment spans residues methionine 1–serine 25. The chain crosses the membrane as a helical span at residues isoleucine 26–phenylalanine 46. Residues leucine 47–alanine 128 lie on the Extracellular side of the membrane. Residues threonine 129–valine 149 traverse the membrane as a helical segment. At threonine 150–lysine 707 the chain is on the cytoplasmic side. Residue glycine 246–threonine 253 coordinates ATP. Residue histidine 468 participates in Zn(2+) binding. Glutamate 469 is an active-site residue. Zn(2+) contacts are provided by histidine 472 and aspartate 546.

This sequence in the central section; belongs to the AAA ATPase family. It in the C-terminal section; belongs to the peptidase M41 family. As to quaternary structure, homohexamer. Requires Zn(2+) as cofactor.

It is found in the cell membrane. Its function is as follows. Acts as a processive, ATP-dependent zinc metallopeptidase for both cytoplasmic and membrane proteins. Plays a role in the quality control of integral membrane proteins. In Mycoplasma mobile (strain ATCC 43663 / 163K / NCTC 11711) (Mesomycoplasma mobile), this protein is ATP-dependent zinc metalloprotease FtsH.